We begin with the raw amino-acid sequence, 77 residues long: uncharacterized protein (77 aa).

Residues 1–15 (MNRTSESVEPQQNEK) are compositionally biased toward polar residues. Disordered stretches follow at residues 1-20 (MNRT…AVHW) and 31-52 (TYSN…QRTF). Residues 33–44 (SNEDDEDNEEGD) are compositionally biased toward acidic residues.

This is an uncharacterized protein from Schizosaccharomyces pombe (strain 972 / ATCC 24843) (Fission yeast).